A 425-amino-acid polypeptide reads, in one-letter code: Kynureninase (425 aa).

Residues L105, T106, 133-136 (FPSD), D218, H221, and Y243 contribute to the pyridoxal 5'-phosphate site. At K244 the chain carries N6-(pyridoxal phosphate)lysine. Residues W274 and N302 each coordinate pyridoxal 5'-phosphate.

The protein belongs to the kynureninase family. In terms of assembly, homodimer. The cofactor is pyridoxal 5'-phosphate.

The catalysed reaction is L-kynurenine + H2O = anthranilate + L-alanine + H(+). It carries out the reaction 3-hydroxy-L-kynurenine + H2O = 3-hydroxyanthranilate + L-alanine + H(+). The protein operates within amino-acid degradation; L-kynurenine degradation; L-alanine and anthranilate from L-kynurenine: step 1/1. It participates in cofactor biosynthesis; NAD(+) biosynthesis; quinolinate from L-kynurenine: step 2/3. Its function is as follows. Catalyzes the cleavage of L-kynurenine (L-Kyn) and L-3-hydroxykynurenine (L-3OHKyn) into anthranilic acid (AA) and 3-hydroxyanthranilic acid (3-OHAA), respectively. The polypeptide is Kynureninase (Flavobacterium psychrophilum (strain ATCC 49511 / DSM 21280 / CIP 103535 / JIP02/86)).